A 62-amino-acid polypeptide reads, in one-letter code: Large ribosomal subunit protein bL28 (62 aa).

It belongs to the bacterial ribosomal protein bL28 family.

The sequence is that of Large ribosomal subunit protein bL28 from Ruminiclostridium cellulolyticum (strain ATCC 35319 / DSM 5812 / JCM 6584 / H10) (Clostridium cellulolyticum).